Here is a 581-residue protein sequence, read N- to C-terminus: Tetratricopeptide repeat and J domain-containing co-chaperone DNJ1 (581 aa).

An N-terminal signal peptide occupies residues 1 to 19; that stretch reads MKATLLPSLLALSLTLCLA. TPR repeat units lie at residues 48 to 81, 82 to 115, 116 to 149, 221 to 254, 257 to 293, 378 to 411, and 412 to 445; these read ASQH…DPSS, WLTY…NPKF, DKAY…RAEK, LETR…TPSP, LRRL…DPDN, LELH…DPDN, and VEAT…SGRT. N-linked (GlcNAc...) asparagine glycosylation is present at asparagine 293. The J domain occupies 467–528; that stretch reads DYYKVLGVKR…ELRKKYDQGD (62 aa). The segment at 522 to 544 is disordered; it reads KKYDQGDDPNDPMGGQQGGYGNP.

Interacts with the ER chaperone BIP1.

The protein resides in the endoplasmic reticulum lumen. In terms of biological role, endoplasmic reticulum (ER) protein that functions as a co-chaperone for BIP1 during ER stress. Might be specifically involved in the refolding of N-glycosylated proteins. The protein is Tetratricopeptide repeat and J domain-containing co-chaperone DNJ1 of Mycosarcoma maydis (Corn smut fungus).